Reading from the N-terminus, the 182-residue chain is Oligoribonuclease (182 aa).

The 164-residue stretch at 8 to 171 (LLWLDMEMTG…ADIYESIDEL (164 aa)) folds into the Exonuclease domain. The active site involves tyrosine 129.

The protein belongs to the oligoribonuclease family.

Its subcellular location is the cytoplasm. Functionally, 3'-to-5' exoribonuclease specific for small oligoribonucleotides. This Thiobacillus denitrificans (strain ATCC 25259 / T1) protein is Oligoribonuclease.